The chain runs to 432 residues: Trigger factor (432 aa).

The region spanning 161 to 246 is the PPIase FKBP-type domain; sequence EDRVTIDFTG…LKKVEERELP (86 aa).

This sequence belongs to the FKBP-type PPIase family. Tig subfamily.

Its subcellular location is the cytoplasm. It catalyses the reaction [protein]-peptidylproline (omega=180) = [protein]-peptidylproline (omega=0). Its function is as follows. Involved in protein export. Acts as a chaperone by maintaining the newly synthesized protein in an open conformation. Functions as a peptidyl-prolyl cis-trans isomerase. The sequence is that of Trigger factor from Salmonella schwarzengrund (strain CVM19633).